Here is a 90-residue protein sequence, read N- to C-terminus: Sec-independent protein translocase protein TatAo (90 aa).

The helical transmembrane segment at 8–28 (FPGLPGGPELLIVLLIVVLLF) threads the bilayer. Residues 39–90 (SSGQAMGEFRRGREEIEEELKKGAEGGDDEGENGDEAEADDADATETEAESR) form a disordered region. A compositionally biased stretch (basic and acidic residues) spans 46-63 (EFRRGREEIEEELKKGAE). A compositionally biased stretch (acidic residues) spans 64 to 90 (GGDDEGENGDEAEADDADATETEAESR).

It belongs to the TatA/E family. As to quaternary structure, forms a complex with TatC. Cytoplasmic and membrane-bound TatA form high-molecular-weight complexes.

It localises to the cell membrane. It is found in the cytoplasm. Functionally, part of the twin-arginine translocation (Tat) system that transports large folded proteins containing a characteristic twin-arginine motif in their signal peptide across membranes. TatA could form the protein-conducting channel of the Tat system. This is Sec-independent protein translocase protein TatAo from Haloferax volcanii (strain ATCC 29605 / DSM 3757 / JCM 8879 / NBRC 14742 / NCIMB 2012 / VKM B-1768 / DS2) (Halobacterium volcanii).